We begin with the raw amino-acid sequence, 297 residues long: 3-mercaptopyruvate sulfurtransferase (297 aa).

N-acetylalanine is present on Ala-2. 4 positions are modified to phosphoserine: Ser-3, Trp-15, Pro-23, and Ser-35. A Rhodanese 1 domain is found at 25–144; that stretch reads AGQPLQLLDA…WLRQNLPLSS (120 aa). N6-acetyllysine; alternate is present on Lys-40. Residue Lys-40 is modified to N6-succinyllysine; alternate. Positions 145-160 are hinge; the sequence is GKSQPAPAEFRAQLDP. An N6-succinyllysine mark is found at Lys-146 and Lys-164. In terms of domain architecture, Rhodanese 2 spans 174 to 288; the sequence is ESRRFQVVDS…WYMRARPEDV (115 aa). Arg-188 contributes to the substrate binding site. Cys-248 (cysteine persulfide intermediate) is an active-site residue.

As to quaternary structure, monomer (active form). Homodimer; disulfide-linked (inactive form).

It is found in the cytoplasm. The protein localises to the mitochondrion. Its subcellular location is the synapse. The protein resides in the synaptosome. It carries out the reaction 2-oxo-3-sulfanylpropanoate + [thioredoxin]-dithiol = [thioredoxin]-disulfide + hydrogen sulfide + pyruvate + H(+). By oxidative stress, and thioredoxin. Under oxidative stress conditions, the catalytic cysteine site is converted to a sulfenate which inhibits the MPST enzyme activity. Reduced thioredoxin cleaves an intersubunit disulfide bond to turn on the redox switch and reactivate the enzyme. Transfer of a sulfur ion to cyanide or to other thiol compounds. Also has weak rhodanese activity. Detoxifies cyanide and is required for thiosulfate biosynthesis. Acts as an antioxidant. In combination with cysteine aminotransferase (CAT), contributes to the catabolism of cysteine and is an important producer of hydrogen sulfide in the brain, retina and vascular endothelial cells. Hydrogen sulfide H(2)S is an important synaptic modulator, signaling molecule, smooth muscle contractor and neuroprotectant. Its production by the 3MST/CAT pathway is regulated by calcium ions. The sequence is that of 3-mercaptopyruvate sulfurtransferase (MPST) from Homo sapiens (Human).